We begin with the raw amino-acid sequence, 282 residues long: 4-hydroxybenzoate octaprenyltransferase (282 aa).

9 helical membrane-spanning segments follow: residues 17-37 (IGIL…NQGF), 40-60 (IDLL…GCVI), 90-110 (AFIL…KLPI), 113-133 (FYFA…KRFL), 135-155 (APQL…FIAS), 163-183 (FIVL…MYAM), 207-227 (LIIA…AINK), 231-251 (WFFY…LKLI), and 262-282 (AFLV…LALI).

The protein belongs to the UbiA prenyltransferase family. Mg(2+) serves as cofactor.

Its subcellular location is the cell inner membrane. It carries out the reaction all-trans-octaprenyl diphosphate + 4-hydroxybenzoate = 4-hydroxy-3-(all-trans-octaprenyl)benzoate + diphosphate. It participates in cofactor biosynthesis; ubiquinone biosynthesis. Catalyzes the prenylation of para-hydroxybenzoate (PHB) with an all-trans polyprenyl group. Mediates the second step in the final reaction sequence of ubiquinone-8 (UQ-8) biosynthesis, which is the condensation of the polyisoprenoid side chain with PHB, generating the first membrane-bound Q intermediate 3-octaprenyl-4-hydroxybenzoate. This Legionella pneumophila subsp. pneumophila (strain Philadelphia 1 / ATCC 33152 / DSM 7513) protein is 4-hydroxybenzoate octaprenyltransferase.